The following is a 364-amino-acid chain: Biotin synthase (364 aa).

Residues cysteine 68–arginine 303 enclose the Radical SAM core domain. 3 residues coordinate [4Fe-4S] cluster: cysteine 86, cysteine 90, and cysteine 93. Cysteine 131, cysteine 168, cysteine 228, and arginine 298 together coordinate [2Fe-2S] cluster.

It belongs to the radical SAM superfamily. Biotin synthase family. Homodimer. [4Fe-4S] cluster is required as a cofactor. Requires [2Fe-2S] cluster as cofactor.

It catalyses the reaction (4R,5S)-dethiobiotin + (sulfur carrier)-SH + 2 reduced [2Fe-2S]-[ferredoxin] + 2 S-adenosyl-L-methionine = (sulfur carrier)-H + biotin + 2 5'-deoxyadenosine + 2 L-methionine + 2 oxidized [2Fe-2S]-[ferredoxin]. It participates in cofactor biosynthesis; biotin biosynthesis; biotin from 7,8-diaminononanoate: step 2/2. In terms of biological role, catalyzes the conversion of dethiobiotin (DTB) to biotin by the insertion of a sulfur atom into dethiobiotin via a radical-based mechanism. The sequence is that of Biotin synthase from Microcystis aeruginosa (strain NIES-843 / IAM M-2473).